Reading from the N-terminus, the 476-residue chain is Efflux pump atB (476 aa).

The tract at residues 1–38 is disordered; sequence MAPQLAGSSHSSSASDQAHRQSSDPALESGSDTHVGSI. Transmembrane regions (helical) follow at residues 69–89, 96–116, 127–147, 186–206, 264–284, 294–314, 347–367, 372–392, 403–425, and 440–460; these read LIVA…LAPL, KPVY…CAVA, FFNG…VGDL, WSFY…SLLV, LLLC…FGAF, FNLW…IIGI, LPPA…FAWT, VHWI…IMIF, YPLY…AAAF, and WAGF…YIFY.

The protein belongs to the major facilitator superfamily.

It localises to the cell membrane. Its function is as follows. Efflux pump that might be required for efficient secretion of terreic acid. The chain is Efflux pump atB from Aspergillus terreus (strain NIH 2624 / FGSC A1156).